The following is a 976-amino-acid chain: Probable basic-leucine zipper transcription factor Q (976 aa).

2 coiled-coil regions span residues 57–110 (AIDS…QYQQ) and 136–287 (QQQQ…QQQQ). A disordered region spans residues 104 to 128 (YQQQYQQPYTTPSPPDQIDYNQQLS). Polar residues-rich tracts occupy residues 374–385 (TNFNGTNNSTPN) and 393–411 (KLSS…SPPS). The tract at residues 374–499 (TNFNGTNNST…PIDSNGDFDL (126 aa)) is disordered. 2 stretches are compositionally biased toward low complexity: residues 420–468 (PKNN…FNNN) and 476–490 (STTT…MTSP). The region spanning 504–567 (EKKKSISRIN…GVEVMRPEPE (64 aa)) is the bZIP domain. Positions 505 to 507 (KKK) are basic motif. Residues 509–516 (ISRINQNL) are leucine-zipper. The segment covering 855–938 (ENQSNNFGNN…VNSNNNNFNN (84 aa)) has biased composition (low complexity). The segment at 855–957 (ENQSNNFGNN…SADAIPYPST (103 aa)) is disordered.

This sequence belongs to the bZIP family.

Its subcellular location is the nucleus. Its function is as follows. Probable transcriptional regulator. This chain is Probable basic-leucine zipper transcription factor Q (bzpQ), found in Dictyostelium discoideum (Social amoeba).